The chain runs to 528 residues: ATP synthase subunit alpha 1 (528 aa).

177-184 (GDRQTGKT) lines the ATP pocket.

This sequence belongs to the ATPase alpha/beta chains family. In terms of assembly, F-type ATPases have 2 components, CF(1) - the catalytic core - and CF(0) - the membrane proton channel. CF(1) has five subunits: alpha(3), beta(3), gamma(1), delta(1), epsilon(1). CF(0) has three main subunits: a(1), b(2) and c(9-12). The alpha and beta chains form an alternating ring which encloses part of the gamma chain. CF(1) is attached to CF(0) by a central stalk formed by the gamma and epsilon chains, while a peripheral stalk is formed by the delta and b chains.

The protein resides in the cell inner membrane. The catalysed reaction is ATP + H2O + 4 H(+)(in) = ADP + phosphate + 5 H(+)(out). Its function is as follows. Produces ATP from ADP in the presence of a proton gradient across the membrane. The alpha chain is a regulatory subunit. The sequence is that of ATP synthase subunit alpha 1 from Pseudoalteromonas atlantica (strain T6c / ATCC BAA-1087).